Consider the following 417-residue polypeptide: Serine hydroxymethyltransferase (417 aa).

(6S)-5,6,7,8-tetrahydrofolate contacts are provided by residues Leu121 and 125–127 (GHL). At Lys230 the chain carries N6-(pyridoxal phosphate)lysine. 355 to 357 (SPF) contributes to the (6S)-5,6,7,8-tetrahydrofolate binding site.

This sequence belongs to the SHMT family. Homodimer. It depends on pyridoxal 5'-phosphate as a cofactor.

It is found in the cytoplasm. The enzyme catalyses (6R)-5,10-methylene-5,6,7,8-tetrahydrofolate + glycine + H2O = (6S)-5,6,7,8-tetrahydrofolate + L-serine. Its pathway is one-carbon metabolism; tetrahydrofolate interconversion. The protein operates within amino-acid biosynthesis; glycine biosynthesis; glycine from L-serine: step 1/1. In terms of biological role, catalyzes the reversible interconversion of serine and glycine with tetrahydrofolate (THF) serving as the one-carbon carrier. This reaction serves as the major source of one-carbon groups required for the biosynthesis of purines, thymidylate, methionine, and other important biomolecules. Also exhibits THF-independent aldolase activity toward beta-hydroxyamino acids, producing glycine and aldehydes, via a retro-aldol mechanism. The chain is Serine hydroxymethyltransferase from Legionella pneumophila (strain Corby).